Reading from the N-terminus, the 399-residue chain is Argininosuccinate synthase (399 aa).

8–16 (AYSGGLDTS) is an ATP binding site. L-citrulline contacts are provided by tyrosine 87 and serine 92. Glycine 117 contacts ATP. Residues threonine 119, asparagine 123, and aspartate 124 each coordinate L-aspartate. Asparagine 123 provides a ligand contact to L-citrulline. L-citrulline contacts are provided by arginine 127, serine 176, serine 185, glutamate 261, and tyrosine 273.

This sequence belongs to the argininosuccinate synthase family. Type 1 subfamily. As to quaternary structure, homotetramer.

It localises to the cytoplasm. It catalyses the reaction L-citrulline + L-aspartate + ATP = 2-(N(omega)-L-arginino)succinate + AMP + diphosphate + H(+). It functions in the pathway amino-acid biosynthesis; L-arginine biosynthesis; L-arginine from L-ornithine and carbamoyl phosphate: step 2/3. The sequence is that of Argininosuccinate synthase from Clostridioides difficile (strain 630) (Peptoclostridium difficile).